The primary structure comprises 498 residues: ATP synthase subunit beta, chloroplastic (498 aa).

ATP is bound at residue 172–179 (GGAGVGKT).

This sequence belongs to the ATPase alpha/beta chains family. F-type ATPases have 2 components, CF(1) - the catalytic core - and CF(0) - the membrane proton channel. CF(1) has five subunits: alpha(3), beta(3), gamma(1), delta(1), epsilon(1). CF(0) has four main subunits: a(1), b(1), b'(1) and c(9-12).

The protein localises to the plastid. Its subcellular location is the chloroplast thylakoid membrane. It catalyses the reaction ATP + H2O + 4 H(+)(in) = ADP + phosphate + 5 H(+)(out). Produces ATP from ADP in the presence of a proton gradient across the membrane. The catalytic sites are hosted primarily by the beta subunits. The chain is ATP synthase subunit beta, chloroplastic from Canella winterana (Wild cinnamon).